The chain runs to 571 residues: 15-cis-phytoene desaturase, chloroplastic/chromoplastic (571 aa).

The N-terminal 96 residues, 1–96 (MDTGCLSSMN…FRNSERPSKP (96 aa)), are a transit peptide targeting the chloroplast and chromoplast. FAD is bound by residues alanine 107, 126–127 (EA), lysine 134, 151–152 (HI), and tyrosine 157. Arginine 292 is a binding site for substrate. Residues isoleucine 334 and aspartate 523 each contribute to the FAD site. Position 531 (alanine 531) interacts with substrate. Methionine 533 contributes to the FAD binding site.

Belongs to the carotenoid/retinoid oxidoreductase family. In terms of assembly, homotetramer. Requires FAD as cofactor.

The protein resides in the plastid. Its subcellular location is the chloroplast. It localises to the chromoplast. The protein localises to the membrane. The catalysed reaction is 2 a plastoquinone + 15-cis-phytoene = 9,9',15-tri-cis-zeta-carotene + 2 a plastoquinol. Its pathway is carotenoid biosynthesis; lycopene biosynthesis. Converts phytoene into zeta-carotene via the intermediary of phytofluene by the symmetrical introduction of two double bonds at the C-11 and C-11' positions of phytoene with a concomitant isomerization of two neighboring double bonds at the C9 and C9' positions from trans to cis. The polypeptide is 15-cis-phytoene desaturase, chloroplastic/chromoplastic (PDS1) (Zea mays (Maize)).